A 120-amino-acid chain; its full sequence is Large ribosomal subunit protein bL20 (120 aa).

The protein belongs to the bacterial ribosomal protein bL20 family.

In terms of biological role, binds directly to 23S ribosomal RNA and is necessary for the in vitro assembly process of the 50S ribosomal subunit. It is not involved in the protein synthesizing functions of that subunit. In Cereibacter sphaeroides (strain ATCC 17029 / ATH 2.4.9) (Rhodobacter sphaeroides), this protein is Large ribosomal subunit protein bL20.